Here is a 705-residue protein sequence, read N- to C-terminus: tRNA 5-methylaminomethyl-2-thiouridine biosynthesis bifunctional protein MnmC (705 aa).

The interval 1 to 241 (MTIKTADIQF…KREMLAGIIA (241 aa)) is tRNA (mnm(5)s(2)U34)-methyltransferase. The segment at 289 to 705 (IGAGIAGASM…LIRQLIRREV (417 aa)) is FAD-dependent cmnm(5)s(2)U34 oxidoreductase.

It in the N-terminal section; belongs to the methyltransferase superfamily. tRNA (mnm(5)s(2)U34)-methyltransferase family. The protein in the C-terminal section; belongs to the DAO family. The cofactor is FAD.

The protein localises to the cytoplasm. It catalyses the reaction 5-aminomethyl-2-thiouridine(34) in tRNA + S-adenosyl-L-methionine = 5-methylaminomethyl-2-thiouridine(34) in tRNA + S-adenosyl-L-homocysteine + H(+). Functionally, catalyzes the last two steps in the biosynthesis of 5-methylaminomethyl-2-thiouridine (mnm(5)s(2)U) at the wobble position (U34) in tRNA. Catalyzes the FAD-dependent demodification of cmnm(5)s(2)U34 to nm(5)s(2)U34, followed by the transfer of a methyl group from S-adenosyl-L-methionine to nm(5)s(2)U34, to form mnm(5)s(2)U34. The polypeptide is tRNA 5-methylaminomethyl-2-thiouridine biosynthesis bifunctional protein MnmC (Pseudoalteromonas atlantica (strain T6c / ATCC BAA-1087)).